Reading from the N-terminus, the 576-residue chain is Arginine--tRNA ligase (576 aa).

The 'HIGH' region signature appears at 122-132 (PNVAKQMHVGH).

It belongs to the class-I aminoacyl-tRNA synthetase family. Monomer.

Its subcellular location is the cytoplasm. It carries out the reaction tRNA(Arg) + L-arginine + ATP = L-arginyl-tRNA(Arg) + AMP + diphosphate. The polypeptide is Arginine--tRNA ligase (Yersinia pestis bv. Antiqua (strain Antiqua)).